The chain runs to 269 residues: Undecaprenyl-diphosphatase (269 aa).

The next 8 helical transmembrane spans lie at 3–23 (LLIK…LPIS), 41–61 (FATM…VFYY), 78–98 (GFNL…IGLL), 107–127 (LFSP…MIVI), 148–167 (SLLI…SRSA), 184–204 (AEFS…LSLL), 213–233 (LEWQ…LFVV), and 248–268 (FAYY…EKIV).

This sequence belongs to the UppP family.

Its subcellular location is the cell membrane. The catalysed reaction is di-trans,octa-cis-undecaprenyl diphosphate + H2O = di-trans,octa-cis-undecaprenyl phosphate + phosphate + H(+). Functionally, catalyzes the dephosphorylation of undecaprenyl diphosphate (UPP). Confers resistance to bacitracin. In Thermoanaerobacter sp. (strain X514), this protein is Undecaprenyl-diphosphatase.